Consider the following 244-residue polypeptide: Ribosomal RNA small subunit methyltransferase G (244 aa).

S-adenosyl-L-methionine contacts are provided by residues G79, F84, 130–131, and R150; that span reads AE. The interval 221-244 is disordered; the sequence is KKPSPKRYPRKPGTPAKQPLTAPM.

Belongs to the methyltransferase superfamily. RNA methyltransferase RsmG family.

It is found in the cytoplasm. In terms of biological role, specifically methylates the N7 position of a guanine in 16S rRNA. The sequence is that of Ribosomal RNA small subunit methyltransferase G from Lactiplantibacillus plantarum (strain ATCC BAA-793 / NCIMB 8826 / WCFS1) (Lactobacillus plantarum).